The chain runs to 54 residues: Large ribosomal subunit protein bL33C (54 aa).

This sequence belongs to the bacterial ribosomal protein bL33 family.

The polypeptide is Large ribosomal subunit protein bL33C (rpmG3) (Streptomyces coelicolor (strain ATCC BAA-471 / A3(2) / M145)).